Reading from the N-terminus, the 226-residue chain is Biosynthetic peptidoglycan transglycosylase (226 aa).

Residues 10–30 (IIMTLLALLILPYLLIPVYAL) form a helical membrane-spanning segment.

Belongs to the glycosyltransferase 51 family.

It localises to the cell inner membrane. It catalyses the reaction [GlcNAc-(1-&gt;4)-Mur2Ac(oyl-L-Ala-gamma-D-Glu-L-Lys-D-Ala-D-Ala)](n)-di-trans,octa-cis-undecaprenyl diphosphate + beta-D-GlcNAc-(1-&gt;4)-Mur2Ac(oyl-L-Ala-gamma-D-Glu-L-Lys-D-Ala-D-Ala)-di-trans,octa-cis-undecaprenyl diphosphate = [GlcNAc-(1-&gt;4)-Mur2Ac(oyl-L-Ala-gamma-D-Glu-L-Lys-D-Ala-D-Ala)](n+1)-di-trans,octa-cis-undecaprenyl diphosphate + di-trans,octa-cis-undecaprenyl diphosphate + H(+). It functions in the pathway cell wall biogenesis; peptidoglycan biosynthesis. Its function is as follows. Peptidoglycan polymerase that catalyzes glycan chain elongation from lipid-linked precursors. The protein is Biosynthetic peptidoglycan transglycosylase of Agrobacterium fabrum (strain C58 / ATCC 33970) (Agrobacterium tumefaciens (strain C58)).